Here is a 351-residue protein sequence, read N- to C-terminus: uncharacterized protein (351 aa).

5 residues coordinate Mn(2+): D215, D226, H290, E319, and E333.

It belongs to the peptidase M24B family. Requires Mn(2+) as cofactor.

This is an uncharacterized protein from Staphylococcus aureus (strain USA300).